Reading from the N-terminus, the 580-residue chain is tRNA-guanine(15) transglycosylase (580 aa).

Asp-91 functions as the Nucleophile in the catalytic mechanism. Positions 126 and 192 each coordinate substrate. Residues Cys-275, Cys-277, and Cys-280 each contribute to the Zn(2+) site. The region spanning 504–579 (RMRVVVDEDA…LAVKVRRGVE (76 aa)) is the PUA domain.

The protein belongs to the archaeosine tRNA-ribosyltransferase family. Zn(2+) is required as a cofactor.

It catalyses the reaction guanosine(15) in tRNA + 7-cyano-7-deazaguanine = 7-cyano-7-carbaguanosine(15) in tRNA + guanine. It participates in tRNA modification; archaeosine-tRNA biosynthesis. Exchanges the guanine residue with 7-cyano-7-deazaguanine (preQ0) at position 15 in the dihydrouridine loop (D-loop) of archaeal tRNAs. This chain is tRNA-guanine(15) transglycosylase, found in Thermococcus kodakarensis (strain ATCC BAA-918 / JCM 12380 / KOD1) (Pyrococcus kodakaraensis (strain KOD1)).